A 568-amino-acid chain; its full sequence is Cytosolic purine 5'-nucleotidase (568 aa).

Residue D52 is the Nucleophile of the active site. D52 and D54 together coordinate IMP. Residues D52 and D54 each contribute to the Mg(2+) site. Residue D54 is the Proton donor of the active site. The ATP site is built by R144 and N154. The IMP site is built by R202, D206, K215, T249, N250, S251, and K292. D351 serves as a coordination point for Mg(2+). Residues Q453 and R456 each coordinate ATP. The interval 528–568 (ISEIKPPNLFPQKPQEITHCHDEDDDEEEEEEEEEEEEEEE) is disordered. The segment at 548–568 (HDEDDDEEEEEEEEEEEEEEE) is required for tetramer assembly. Positions 550 to 568 (EDDDEEEEEEEEEEEEEEE) are enriched in acidic residues.

It belongs to the 5'(3')-deoxyribonucleotidase family. As to quaternary structure, homotetramer. Mg(2+) is required as a cofactor.

It is found in the cytoplasm. Its subcellular location is the cytosol. It carries out the reaction a ribonucleoside 5'-phosphate + H2O = a ribonucleoside + phosphate. The enzyme catalyses a 2'-deoxyribonucleoside + a ribonucleoside 5'-phosphate = a ribonucleoside + a 2'-deoxyribonucleoside 5'-phosphate. The catalysed reaction is IMP + H2O = inosine + phosphate. It catalyses the reaction GMP + H2O = guanosine + phosphate. It carries out the reaction dIMP + H2O = 2'-deoxyinosine + phosphate. The enzyme catalyses dGMP + H2O = 2'-deoxyguanosine + phosphate. The catalysed reaction is XMP + H2O = xanthosine + phosphate. It catalyses the reaction inosine + GMP = guanosine + IMP. It carries out the reaction dGMP + inosine = 2'-deoxyguanosine + IMP. The enzyme catalyses dIMP + inosine = 2'-deoxyinosine + IMP. The catalysed reaction is inosine + UMP = uridine + IMP. It catalyses the reaction inosine + CMP = cytidine + IMP. It carries out the reaction inosine + AMP = IMP + adenosine. Allosterically activated by various compounds including ATP, 2,3-BPG/2,3-Bisphosphoglyceric acid and Ap4A/P1,P4-bis(5'-adenosyl) tetraphosphate. Binding of an allosteric activator is a prerequisiste to magnesium and substrate binding. Inhibited by inorganic phosphate. Its function is as follows. Broad specificity cytosolic 5'-nucleotidase that catalyzes the dephosphorylation of 6-hydroxypurine nucleoside 5'-monophosphates. In addition, possesses a phosphotransferase activity by which it can transfer a phosphate from a donor nucleoside monophosphate to an acceptor nucleoside, preferably inosine, deoxyinosine and guanosine. Has the highest activities for IMP and GMP followed by dIMP, dGMP and XMP. Could also catalyze the transfer of phosphates from pyrimidine monophosphates but with lower efficiency. Through these activities regulates the purine nucleoside/nucleotide pools within the cell. In Xenopus tropicalis (Western clawed frog), this protein is Cytosolic purine 5'-nucleotidase (nt5c2).